We begin with the raw amino-acid sequence, 240 residues long: DNA repair protein RecO (240 aa).

It belongs to the RecO family.

Functionally, involved in DNA repair and RecF pathway recombination. The protein is DNA repair protein RecO of Xanthomonas oryzae pv. oryzae (strain MAFF 311018).